A 259-amino-acid chain; its full sequence is MTNTALPTSSADQENDTQLNELHKSQNAVVLLSGGLDSVTCLYWAKARYASVTAVSFDYGQRHNSELVAAKAIAETAGVNHRIIDIDIAQLGGSSLTDHSMIVPDGDTDKFPDKKRDEIDNDAIPNTYVPARNTIFLSYALAVAEVTDSNHIVIGVSSVDYSGYPDCRPEYIAAFQHMANLATKAGVTGHHLSIQTPLQQLSKAKTIELGLSLGVDYGQTISCYQADANGLACGVCDSCALRRQGFAQAGVADPTHYQS.

An ATP-binding site is contributed by 32–42 (LSGGLDSVTCL). Zn(2+) contacts are provided by Cys223, Cys233, Cys236, and Cys239.

The protein belongs to the QueC family. Zn(2+) serves as cofactor.

The catalysed reaction is 7-carboxy-7-deazaguanine + NH4(+) + ATP = 7-cyano-7-deazaguanine + ADP + phosphate + H2O + H(+). Its pathway is purine metabolism; 7-cyano-7-deazaguanine biosynthesis. Its function is as follows. Catalyzes the ATP-dependent conversion of 7-carboxy-7-deazaguanine (CDG) to 7-cyano-7-deazaguanine (preQ(0)). This chain is 7-cyano-7-deazaguanine synthase, found in Psychrobacter cryohalolentis (strain ATCC BAA-1226 / DSM 17306 / VKM B-2378 / K5).